Here is a 217-residue protein sequence, read N- to C-terminus: Large ribosomal subunit protein uL3 (217 aa).

This sequence belongs to the universal ribosomal protein uL3 family. Part of the 50S ribosomal subunit. Forms a cluster with proteins L14 and L19.

Functionally, one of the primary rRNA binding proteins, it binds directly near the 3'-end of the 23S rRNA, where it nucleates assembly of the 50S subunit. In Mycobacterium marinum (strain ATCC BAA-535 / M), this protein is Large ribosomal subunit protein uL3.